A 73-amino-acid polypeptide reads, in one-letter code: UPF0435 protein BH2488 (73 aa).

The protein belongs to the UPF0435 family.

The protein is UPF0435 protein BH2488 of Halalkalibacterium halodurans (strain ATCC BAA-125 / DSM 18197 / FERM 7344 / JCM 9153 / C-125) (Bacillus halodurans).